The sequence spans 164 residues: Protein-export protein SecB (164 aa).

The protein belongs to the SecB family. Homotetramer, a dimer of dimers. One homotetramer interacts with 1 SecA dimer.

The protein resides in the cytoplasm. Its function is as follows. One of the proteins required for the normal export of preproteins out of the cell cytoplasm. It is a molecular chaperone that binds to a subset of precursor proteins, maintaining them in a translocation-competent state. It also specifically binds to its receptor SecA. This chain is Protein-export protein SecB, found in Caulobacter sp. (strain K31).